The following is a 418-amino-acid chain: Exodeoxyribonuclease 7 large subunit (418 aa).

It belongs to the XseA family. In terms of assembly, heterooligomer composed of large and small subunits.

The protein localises to the cytoplasm. The enzyme catalyses Exonucleolytic cleavage in either 5'- to 3'- or 3'- to 5'-direction to yield nucleoside 5'-phosphates.. Bidirectionally degrades single-stranded DNA into large acid-insoluble oligonucleotides, which are then degraded further into small acid-soluble oligonucleotides. The polypeptide is Exodeoxyribonuclease 7 large subunit (Acaryochloris marina (strain MBIC 11017)).